We begin with the raw amino-acid sequence, 365 residues long: Fructose-1,6-bisphosphate aldolase/phosphatase (365 aa).

Asp11 functions as the Proton acceptor; for FBP phosphatase activity in the catalytic mechanism. Positions 11, 18, 52, and 53 each coordinate Mg(2+). Residue His18 participates in beta-D-fructose 1,6-bisphosphate binding. His18 contributes to the dihydroxyacetone phosphate binding site. Residue Tyr90 participates in beta-D-fructose 1,6-bisphosphate binding. Mg(2+) is bound at residue Gln94. Position 103-104 (103-104 (GN)) interacts with beta-D-fructose 1,6-bisphosphate. Residue Asp131 coordinates Mg(2+). Lys132 provides a ligand contact to beta-D-fructose 1,6-bisphosphate. Lys132 contacts dihydroxyacetone phosphate. Tyr228 acts as the Proton donor/acceptor; for FBP aldolase activity in catalysis. Mg(2+)-binding residues include Lys231, Asp232, and Asp233. Lys231 serves as the catalytic Schiff-base intermediate with DHAP; for FBP aldolase activity. Beta-D-fructose 1,6-bisphosphate is bound by residues 241 to 242 (QS), Arg265, Asp286, and Tyr347. Dihydroxyacetone phosphate-binding residues include Arg265 and Asp286.

It belongs to the FBP aldolase/phosphatase family. As to quaternary structure, homooctamer; dimer of tetramers. It depends on Mg(2+) as a cofactor.

It catalyses the reaction beta-D-fructose 1,6-bisphosphate + H2O = beta-D-fructose 6-phosphate + phosphate. The catalysed reaction is beta-D-fructose 1,6-bisphosphate = D-glyceraldehyde 3-phosphate + dihydroxyacetone phosphate. It functions in the pathway carbohydrate biosynthesis; gluconeogenesis. Catalyzes two subsequent steps in gluconeogenesis: the aldol condensation of dihydroxyacetone phosphate (DHAP) and glyceraldehyde-3-phosphate (GA3P) to fructose-1,6-bisphosphate (FBP), and the dephosphorylation of FBP to fructose-6-phosphate (F6P). In Methanothermobacter marburgensis (strain ATCC BAA-927 / DSM 2133 / JCM 14651 / NBRC 100331 / OCM 82 / Marburg) (Methanobacterium thermoautotrophicum), this protein is Fructose-1,6-bisphosphate aldolase/phosphatase.